A 424-amino-acid polypeptide reads, in one-letter code: Serine--tRNA ligase (424 aa).

232 to 234 (TAE) lines the L-serine pocket. 263–265 (RQE) is an ATP binding site. Position 286 (Glu-286) interacts with L-serine. 350–353 (EIGS) contacts ATP. L-serine is bound at residue Ser-386.

Belongs to the class-II aminoacyl-tRNA synthetase family. Type-1 seryl-tRNA synthetase subfamily. Homodimer. The tRNA molecule binds across the dimer.

The protein localises to the cytoplasm. It carries out the reaction tRNA(Ser) + L-serine + ATP = L-seryl-tRNA(Ser) + AMP + diphosphate + H(+). The catalysed reaction is tRNA(Sec) + L-serine + ATP = L-seryl-tRNA(Sec) + AMP + diphosphate + H(+). It functions in the pathway aminoacyl-tRNA biosynthesis; selenocysteinyl-tRNA(Sec) biosynthesis; L-seryl-tRNA(Sec) from L-serine and tRNA(Sec): step 1/1. In terms of biological role, catalyzes the attachment of serine to tRNA(Ser). Is also able to aminoacylate tRNA(Sec) with serine, to form the misacylated tRNA L-seryl-tRNA(Sec), which will be further converted into selenocysteinyl-tRNA(Sec). In Onion yellows phytoplasma (strain OY-M), this protein is Serine--tRNA ligase.